The sequence spans 185 residues: Ribosome-recycling factor (185 aa).

Belongs to the RRF family.

The protein resides in the cytoplasm. Responsible for the release of ribosomes from messenger RNA at the termination of protein biosynthesis. May increase the efficiency of translation by recycling ribosomes from one round of translation to another. The chain is Ribosome-recycling factor from Desulfatibacillum aliphaticivorans.